A 366-amino-acid polypeptide reads, in one-letter code: MSLEESPKRKIRCPEVQVPQSNIDEELEKIVEQIKARIYVVGVGGAGCNTVNRMMEVGVTGAKIIAVNTDAQDLLKVKAHQKILIGKELTRGLGAGNDPKIGEEAAKESERELRDALEGADMVFITCGLGGGTGTGAAPVIAEIARKMGELTVSVVTLPFTMEGIRRAKNAEYGLKRLVKYSDTVIVIPNDKLLEVAPKLPIQMAFKVADEILVQAVKGITELITKPGLVNLDFNDVRAVMKDRGVAMIGIGESDSEKRALEAAEQALNSPLLDVDISGASGALIHISGADVKLEEAQQIIEYVTRNVDSKAQVIWGIQLEPELEKTIRVMVVITGVTSRYITPEEETPLETPEESPSIEISIPEL.

Residues 45 to 49, 132 to 134, glutamate 163, arginine 167, and aspartate 210 contribute to the GTP site; these read GAGCN and GTG. The span at 344–354 shows a compositional bias: acidic residues; it reads PEEETPLETPE. Residues 344-366 form a disordered region; the sequence is PEEETPLETPEESPSIEISIPEL. A compositionally biased stretch (low complexity) spans 355–366; the sequence is ESPSIEISIPEL.

This sequence belongs to the FtsZ family. In terms of assembly, homodimer. Polymerizes to form a dynamic ring structure in a strictly GTP-dependent manner. Interacts directly with several other division proteins.

It is found in the cytoplasm. Essential cell division protein that forms a contractile ring structure (Z ring) at the future cell division site. The regulation of the ring assembly controls the timing and the location of cell division. One of the functions of the FtsZ ring is to recruit other cell division proteins to the septum to produce a new cell wall between the dividing cells. Binds GTP and shows GTPase activity. The protein is Cell division protein FtsZ 1 of Pyrococcus woesei.